A 297-amino-acid polypeptide reads, in one-letter code: Undecaprenyl-diphosphatase 3 (297 aa).

6 helical membrane-spanning segments follow: residues 39–59, 89–109, 118–138, 203–223, 237–257, and 268–288; these read PGAA…LIYF, WLVL…QDAI, LIAT…WYAS, FLLA…SIGG, PTIV…AWFL, and FVLY…GGAI.

The protein belongs to the UppP family.

It is found in the cell membrane. It catalyses the reaction di-trans,octa-cis-undecaprenyl diphosphate + H2O = di-trans,octa-cis-undecaprenyl phosphate + phosphate + H(+). Its function is as follows. Catalyzes the dephosphorylation of undecaprenyl diphosphate (UPP). Confers resistance to bacitracin. This is Undecaprenyl-diphosphatase 3 from Frankia alni (strain DSM 45986 / CECT 9034 / ACN14a).